Reading from the N-terminus, the 524-residue chain is Zinc finger CCCH-type with G patch domain-containing protein (524 aa).

A disordered region spans residues 105–142 (SEESQPLGSNDETSTCSKGSEEEEEEEEEEEDNTSGMK). The segment covering 106 to 122 (EESQPLGSNDETSTCSK) has biased composition (polar residues). Residues 125-137 (EEEEEEEEEEEDN) are compositionally biased toward acidic residues. The C3H1-type zinc finger occupies 184–210 (KAMKPCPFFLDGKCLFNDNCRFSHGQV). Positions 279-298 (RGSDSSSSSSSDEEEDGAAE) are disordered. Residues 326–372 (TRGIGSKLLVRMGYEFGKGLGRNAEGRVEPIQAVVLPKGKSLDQCME) enclose the G-patch domain. Disordered regions lie at residues 375 to 402 (QRKK…GGAK) and 500 to 524 (GLQQ…MTEF). The span at 376–393 (RKKAGGKHKHKTSKRRPK) shows a compositional bias: basic residues.

It is found in the nucleus. Transcription repressor that specifically binds the 5'-GGAG[GA]A[GA]A-3' consensus sequence. Represses transcription by recruiting the chromatin multiprotein complex NuRD to target promoters. Negatively regulates expression of EGFR, a gene involved in cell proliferation, survival and migration. The sequence is that of Zinc finger CCCH-type with G patch domain-containing protein (zgpat) from Xenopus laevis (African clawed frog).